Reading from the N-terminus, the 500-residue chain is NAD(P)H-quinone oxidoreductase chain 4, chloroplastic (500 aa).

A run of 14 helical transmembrane segments spans residues 4-24 (FPWLTIIVVFPISAGSLMLFL), 35-55 (YTICICILELLLTTYTFCYNF), 87-107 (IGTILLTGFITTLAILAAFPV), 113-130 (LFHFLMLAMYSGQIGSFS), 134-154 (LLLFFIMWELELIPVYLLLSM), 167-187 (FILYTAGSSIFLLIGVLGISL), 211-231 (IILYIGFLIAFAVKSPLIPLH), 242-262 (HYSTCMLLAGILLKMGAYGLV), 272-292 (AHSMFSPWLMVVGTIQIIYAA), 305-325 (IAYSSVSHMGFIIIGIASITD), 330-350 (GAILQIISHGFIGAALFFLAG), 386-406 (LALPGMSGFVAEFIVFFGIIT), 416-436 (ILIIFVMAIGMILTPIYLLSM), and 466-486 (ISSLLPIIGMGIYPDFVLALA).

It belongs to the complex I subunit 4 family.

The protein localises to the plastid. It localises to the chloroplast thylakoid membrane. The enzyme catalyses a plastoquinone + NADH + (n+1) H(+)(in) = a plastoquinol + NAD(+) + n H(+)(out). It catalyses the reaction a plastoquinone + NADPH + (n+1) H(+)(in) = a plastoquinol + NADP(+) + n H(+)(out). In Aethionema grandiflorum (Persian stone-cress), this protein is NAD(P)H-quinone oxidoreductase chain 4, chloroplastic.